The primary structure comprises 355 residues: Elongation factor Ts (355 aa).

The tract at residues 82 to 85 (TDFV) is involved in Mg(2+) ion dislocation from EF-Tu.

This sequence belongs to the EF-Ts family.

Its subcellular location is the cytoplasm. Functionally, associates with the EF-Tu.GDP complex and induces the exchange of GDP to GTP. It remains bound to the aminoacyl-tRNA.EF-Tu.GTP complex up to the GTP hydrolysis stage on the ribosome. This Helicobacter pylori (strain P12) protein is Elongation factor Ts.